Here is a 274-residue protein sequence, read N- to C-terminus: Large ribosomal subunit protein uL2 (274 aa).

A disordered region spans residues 223–258 (VAMNPVDHPHGGGEGRTSGGRHPVTPWGIPTKGYKT).

Belongs to the universal ribosomal protein uL2 family. In terms of assembly, part of the 50S ribosomal subunit. Forms a bridge to the 30S subunit in the 70S ribosome.

In terms of biological role, one of the primary rRNA binding proteins. Required for association of the 30S and 50S subunits to form the 70S ribosome, for tRNA binding and peptide bond formation. It has been suggested to have peptidyltransferase activity; this is somewhat controversial. Makes several contacts with the 16S rRNA in the 70S ribosome. In Pelobacter propionicus (strain DSM 2379 / NBRC 103807 / OttBd1), this protein is Large ribosomal subunit protein uL2.